We begin with the raw amino-acid sequence, 633 residues long: Phosphomethylpyrimidine synthase (633 aa).

Substrate is bound by residues Asn245, Met274, Tyr303, His339, Ser359–Gly361, Asp400–Arg403, and Glu439. His443 serves as a coordination point for Zn(2+). Tyr466 is a substrate binding site. His507 provides a ligand contact to Zn(2+). 3 residues coordinate [4Fe-4S] cluster: Cys587, Cys590, and Cys595.

Belongs to the ThiC family. In terms of assembly, homodimer. Requires [4Fe-4S] cluster as cofactor.

It carries out the reaction 5-amino-1-(5-phospho-beta-D-ribosyl)imidazole + S-adenosyl-L-methionine = 4-amino-2-methyl-5-(phosphooxymethyl)pyrimidine + CO + 5'-deoxyadenosine + formate + L-methionine + 3 H(+). The protein operates within cofactor biosynthesis; thiamine diphosphate biosynthesis. Functionally, catalyzes the synthesis of the hydroxymethylpyrimidine phosphate (HMP-P) moiety of thiamine from aminoimidazole ribotide (AIR) in a radical S-adenosyl-L-methionine (SAM)-dependent reaction. The chain is Phosphomethylpyrimidine synthase from Neisseria gonorrhoeae (strain ATCC 700825 / FA 1090).